The sequence spans 514 residues: MSIRDEIKKRRTFAIISHPDAGKTTITEQLLYFGGEIREAGTVKGKKTGNFAKSDWMDIEKQRGISVTSSVMQFDYAGKRVNILDTPGHEDFSEDTYRTLMAVDAAVMVVDSAKGIEAQTKKLFEVVKHRGIPVFTFMNKLDRDGREPLDLLEELEEVLGIASYPMNWPIGMGKAFEGLYDLYNERLELYKGNERFAKIEDGDTLFANNPFYEQAKEDIELLTEAGNEFSEEAILAGELTPVFFGSALTNFGVQTFLDTFLKFAPEPHGHKTVDGDEIDPLNKDFSGFVFKIQANMDPRHRDRIAFVRIVSGEFERGMSVNLTRTGKGAKLSNVTQFMAESRENVENAVAGDIIGVYDTGTYQVGDTLTVGKNKFEFEPLPTFTPELFMKVSAKNVMKQKSFHKGIEQLVQEGAIQLYTNYQTGEYMLGAVGQLQFEVFKHRMENEYNAEVVMTPMGKKTVRWIQPEDLDERMSSSRNILAKDRFDQPVFLFENDFALRWFADKYPDVTLEEKM.

In terms of domain architecture, tr-type G spans lysine 8–histidine 268. Residues serine 17–threonine 24, aspartate 85–histidine 89, and asparagine 139–aspartate 142 each bind GTP.

This sequence belongs to the TRAFAC class translation factor GTPase superfamily. Classic translation factor GTPase family. PrfC subfamily.

Its subcellular location is the cytoplasm. In terms of biological role, increases the formation of ribosomal termination complexes and stimulates activities of RF-1 and RF-2. It binds guanine nucleotides and has strong preference for UGA stop codons. It may interact directly with the ribosome. The stimulation of RF-1 and RF-2 is significantly reduced by GTP and GDP, but not by GMP. This Streptococcus thermophilus (strain ATCC BAA-491 / LMD-9) protein is Peptide chain release factor 3.